The following is a 224-amino-acid chain: UPF0758 protein Neut_0782 (224 aa).

The MPN domain maps to 102–224 (IMDSPQSVRS…TVSFAERGLI (123 aa)). 3 residues coordinate Zn(2+): histidine 173, histidine 175, and aspartate 186. The JAMM motif signature appears at 173–186 (HNHPSGVAEPSRAD).

Belongs to the UPF0758 family.

This chain is UPF0758 protein Neut_0782, found in Nitrosomonas eutropha (strain DSM 101675 / C91 / Nm57).